The chain runs to 429 residues: Stromal membrane-associated protein 2 (429 aa).

The Arf-GAP domain maps to 13–137 (QAVLANLLLE…LDINAFRKEK (125 aa)). The segment at 28–51 (CADCQSKGPRWASWNIGVFICIRC) adopts a C4-type zinc-finger fold. Ser127 bears the Phosphoserine mark. The segment covering 138–172 (DNKWKRGSEPAPEKKMEPVVFEKVKMPQKKEDPQL) has biased composition (basic and acidic residues). 2 disordered regions span residues 138–181 (DNKW…PKSK) and 217–263 (VSSP…KKQL). An interaction with clathrin heavy chains region spans residues 163 to 232 (MPQKKEDPQL…SVSRKVVGSM (70 aa)). Low complexity predominate over residues 217–231 (VSSPSSSVSRKVVGS). A phosphoserine mark is found at Ser219, Ser223, Ser225, Ser231, and Ser240. Residues 253–263 (SKSEETSKKQL) show a composition bias toward basic and acidic residues. Residues 340–429 (MGGMQASMMG…NQTLSPQMWK (90 aa)) form an interaction with PICALM region.

Interacts with ARF1. Interacts with PICALM and clathrin heavy chains.

The protein resides in the cytoplasm. Its function is as follows. GTPase activating protein that acts on ARF1. Can also activate ARF6 (in vitro). May play a role in clathrin-dependent retrograde transport from early endosomes to the trans-Golgi network. The chain is Stromal membrane-associated protein 2 (SMAP2) from Bos taurus (Bovine).